We begin with the raw amino-acid sequence, 62 residues long: Cytotoxin-like basic protein (62 aa).

Intrachain disulfides connect C3/C22, C15/C40, C44/C55, and C56/C61.

This sequence belongs to the three-finger toxin family. Short-chain subfamily. Orphan group XV sub-subfamily. In terms of tissue distribution, expressed by the venom gland.

It is found in the secreted. The protein localises to the target cell membrane. Functionally, has low cytotoxic activity. In Naja naja (Indian cobra), this protein is Cytotoxin-like basic protein.